Reading from the N-terminus, the 140-residue chain is 3-hydroxyacyl-[acyl-carrier-protein] dehydratase FabZ (140 aa).

Residue His47 is part of the active site.

This sequence belongs to the thioester dehydratase family. FabZ subfamily.

It localises to the cytoplasm. The enzyme catalyses a (3R)-hydroxyacyl-[ACP] = a (2E)-enoyl-[ACP] + H2O. Involved in unsaturated fatty acids biosynthesis. Catalyzes the dehydration of short chain beta-hydroxyacyl-ACPs and long chain saturated and unsaturated beta-hydroxyacyl-ACPs. In Streptococcus equi subsp. equi (strain 4047), this protein is 3-hydroxyacyl-[acyl-carrier-protein] dehydratase FabZ.